A 411-amino-acid polypeptide reads, in one-letter code: MKAARFVLRSAGSLNGAGLVPREVEHFSRYSPSPLSMKQLLDFGSENACERTSFAFLRQELPVRLANILKEIDILPTQLVNTSSVQLVKSWYIQSLMDLVEFHEKSPDDQKALSDFVDTLIKVRNRHHNVVPTMAQGIIEYKDACTVDPVTNQNLQYFLDRFYMNRISTRMLMNQHILIFSDSQTGNPSHIGSIDPNCDVVAVVQDAFECSRMLCDQYYLSSPELKLTQVNGKFPDQPIHIVYVPSHLHHMLFELFKNAMRATVEHQENQPSLTPIEVIVVLGKEDLTIKISDRGGGVPLRIIDRLFSYTYSTAPTPVMDNSRNAPLAGFGYGLPISRLYAKYFQGDLNLYSLSGYGTDAIIYLKALSSESIEKLPVFNKSAFKHYQMSSEADDWCIPSREPKNLAKEVAM.

Residues 138-368 (IIEYKDACTV…DAIIYLKALS (231 aa)) enclose the Histidine kinase domain. Residues 254–261 (ELFKNAMR), Asp-293, 312–313 (ST), and 329–334 (GFGYGL) contribute to the ATP site.

Belongs to the PDK/BCKDK protein kinase family. Homodimer. Interacts with the pyruvate dehydrogenase complex subunit DLAT, and is part of the multimeric pyruvate dehydrogenase complex that contains multiple copies of pyruvate dehydrogenase (E1), dihydrolipoamide acetyltransferase (DLAT, E2) and lipoamide dehydrogenase (DLD, E3). As to expression, ubiquitous; highest levels of expression in heart and skeletal muscle.

Its subcellular location is the mitochondrion matrix. The enzyme catalyses L-seryl-[pyruvate dehydrogenase E1 alpha subunit] + ATP = O-phospho-L-seryl-[pyruvate dehydrogenase E1 alpha subunit] + ADP + H(+). Functionally, kinase that plays a key role in regulation of glucose and fatty acid metabolism and homeostasis via phosphorylation of the pyruvate dehydrogenase subunits PDHA1 and PDHA2. This inhibits pyruvate dehydrogenase activity, and thereby regulates metabolite flux through the tricarboxylic acid cycle, down-regulates aerobic respiration and inhibits the formation of acetyl-coenzyme A from pyruvate. Inhibition of pyruvate dehydrogenase decreases glucose utilization and increases fat metabolism in response to prolonged fasting and starvation. Plays an important role in maintaining normal blood glucose levels under starvation, and is involved in the insulin signaling cascade. Via its regulation of pyruvate dehydrogenase activity, plays an important role in maintaining normal blood pH and in preventing the accumulation of ketone bodies under starvation. In the fed state, mediates cellular responses to glucose levels and to a high-fat diet. Regulates both fatty acid oxidation and de novo fatty acid biosynthesis. Plays a role in the generation of reactive oxygen species. Protects detached epithelial cells against anoikis. Plays a role in cell proliferation via its role in regulating carbohydrate and fatty acid metabolism. The chain is [Pyruvate dehydrogenase (acetyl-transferring)] kinase isozyme 4, mitochondrial (PDK4) from Homo sapiens (Human).